A 279-amino-acid polypeptide reads, in one-letter code: Movement protein (279 aa).

Residues glutamate 247 to leucine 279 are disordered. Residues glutamate 254–serine 268 are compositionally biased toward low complexity.

Belongs to the cucumovirus movement protein family.

The protein localises to the host cell junction. It is found in the host plasmodesma. In terms of biological role, transports viral genome to neighboring plant cells directly through plasmosdesmata, without any budding. The movement protein allows efficient cell to cell propagation, by bypassing the host cell wall barrier. Acts by forming a tubular structure at the host plasmodesmata, enlarging it enough to allow free passage of virion capsids. This Cucumis sativus (Cucumber) protein is Movement protein.